A 329-amino-acid chain; its full sequence is L-lactate dehydrogenase (329 aa).

Residues Val18, Glu39, Lys46, Tyr71, and 85-86 each bind NAD(+); that span reads GA. Substrate is bound by residues Gln88 and Arg94. NAD(+) contacts are provided by residues Ser107, 124–126, and Ser149; that span reads AAN. Substrate is bound at residue 126–129; the sequence is NPVD. 154–157 is a substrate binding site; that stretch reads DSAR. Beta-D-fructose 1,6-bisphosphate contacts are provided by Arg159 and His174. His181 (proton acceptor) is an active-site residue. The residue at position 226 (Tyr226) is a Phosphotyrosine. A substrate-binding site is contributed by Thr235.

The protein belongs to the LDH/MDH superfamily. LDH family. Homotetramer.

Its subcellular location is the cytoplasm. It carries out the reaction (S)-lactate + NAD(+) = pyruvate + NADH + H(+). The protein operates within fermentation; pyruvate fermentation to lactate; (S)-lactate from pyruvate: step 1/1. With respect to regulation, allosterically activated by fructose 1,6-bisphosphate (FBP). Its function is as follows. Catalyzes the conversion of lactate to pyruvate. This Streptococcus equinus (Streptococcus bovis) protein is L-lactate dehydrogenase.